The primary structure comprises 226 residues: Ribonuclease 3 (226 aa).

The region spanning 6–128 (INRLQRKLGY…LIGGVFLDSN (123 aa)) is the RNase III domain. Glutamate 41 contacts Mg(2+). The active site involves aspartate 45. Residues aspartate 114 and glutamate 117 each contribute to the Mg(2+) site. Glutamate 117 is an active-site residue. Residues 155–225 (DPKTRLQEYL…AEQALKKLEL (71 aa)) form the DRBM domain.

It belongs to the ribonuclease III family. Homodimer. The cofactor is Mg(2+).

Its subcellular location is the cytoplasm. The enzyme catalyses Endonucleolytic cleavage to 5'-phosphomonoester.. Its function is as follows. Digests double-stranded RNA. Involved in the processing of primary rRNA transcript to yield the immediate precursors to the large and small rRNAs (23S and 16S). Processes some mRNAs, and tRNAs when they are encoded in the rRNA operon. Processes pre-crRNA and tracrRNA of type II CRISPR loci if present in the organism. The polypeptide is Ribonuclease 3 (Salmonella typhi).